An 830-amino-acid polypeptide reads, in one-letter code: Prolactin receptor (830 aa).

An N-terminal signal peptide occupies residues 1-23 (MKQKLRSSVQIILLFALTAVGLT). Residues 24 to 439 (GQSYPGKPKI…QIPTDFRIKD (416 aa)) are Extracellular-facing. 4 Fibronectin type-III domains span residues 30–128 (KPKI…VQPD), 129–228 (APVN…IPNG), 231–331 (PPEK…IVQT), and 333–434 (PPVN…IPTD). Cys-36 and Cys-46 are disulfide-bonded. Asn-59 carries an N-linked (GlcNAc...) asparagine glycan. A disulfide bridge links Cys-75 with Cys-86. Asn-91, Asn-100, Asn-112, Asn-132, Asn-263, Asn-304, Asn-316, and Asn-336 each carry an N-linked (GlcNAc...) asparagine glycan. Residues Asp-415 and His-417 each contribute to the Zn(2+) site. The short motif at 420–424 (WSEWS) is the WSXWS motif element. The helical transmembrane segment at 440-460 (MVVWIIVGVLSSLICLVMSWT) threads the bilayer. At 461–830 (MVLKGYRMIA…DPSSFIPAFK (370 aa)) the chain is on the cytoplasmic side. Positions 472 to 480 (ILPPVPGPK) match the Box 1 motif motif.

Belongs to the type I cytokine receptor family. Type 1 subfamily.

The protein resides in the membrane. This is a receptor for the anterior pituitary hormone prolactin. This Columba livia (Rock dove) protein is Prolactin receptor (PRLR).